A 355-amino-acid polypeptide reads, in one-letter code: 3-dehydroquinate synthase (355 aa).

NAD(+) contacts are provided by residues 71 to 76 (EGEASK), 105 to 109 (GVVGD), 129 to 130 (TS), K142, K151, and 169 to 172 (TLKT). Residues E184, H246, and H263 each contribute to the Zn(2+) site.

It belongs to the sugar phosphate cyclases superfamily. Dehydroquinate synthase family. Requires Co(2+) as cofactor. Zn(2+) is required as a cofactor. It depends on NAD(+) as a cofactor.

The protein resides in the cytoplasm. The catalysed reaction is 7-phospho-2-dehydro-3-deoxy-D-arabino-heptonate = 3-dehydroquinate + phosphate. It functions in the pathway metabolic intermediate biosynthesis; chorismate biosynthesis; chorismate from D-erythrose 4-phosphate and phosphoenolpyruvate: step 2/7. Its function is as follows. Catalyzes the conversion of 3-deoxy-D-arabino-heptulosonate 7-phosphate (DAHP) to dehydroquinate (DHQ). This chain is 3-dehydroquinate synthase, found in Streptococcus suis (strain 98HAH33).